Reading from the N-terminus, the 498-residue chain is ADP,ATP carrier protein 1 (498 aa).

The Cytoplasmic segment spans residues 1–33; sequence MNNPKNDNYLSELSKVIWPIERYENKKFLPMAF. The chain crosses the membrane as a helical span at residues 34 to 54; it reads MMFCILLNYSTLRSIKDGFVV. The cysteines at positions 37 and 85 are disulfide-linked. Topologically, residues 55-67 are extracellular; that stretch reads TDIGAEAISFLKT. Residues 68 to 88 form a helical membrane-spanning segment; sequence YIVLPSAVIAMVIYVKLCDIL. The Cytoplasmic segment spans residues 89–92; that stretch reads KQEN. Residues 93-113 form a helical membrane-spanning segment; that stretch reads VFYVITSFFLGYFALFAFVLY. Residues 114-147 lie on the Extracellular side of the membrane; the sequence is PYPDLVHPDPETIESWSVAYPNVKWFIRIVGKWS. A helical membrane pass occupies residues 148 to 168; the sequence is FASFYTMAELWGTMMLSLLFW. The Cytoplasmic portion of the chain corresponds to 169-184; it reads QFANQITKTDEAKRFY. The helical transmembrane segment at 185–205 threads the bilayer; the sequence is SMFGLLANLALPVTSVIIGYC. Over 206 to 218 the chain is Extracellular; it reads LHEKTQIVAEHLK. Residues 219-239 traverse the membrane as a helical segment; that stretch reads FVPLFVIMITSSFLVILTYRW. At 240–279 the chain is on the cytoplasmic side; sequence MNKNVLTDPRLYDPALVKEKKAKAKMSLIDSFKMIFTSKY. The helical transmembrane segment at 280–300 threads the bilayer; sequence VGYIALLLIAYGVSVNLVEGV. At 301 to 320 the chain is on the extracellular side; that stretch reads WKSKVKELYPTKEAYTIYMG. Residues 321-341 form a helical membrane-spanning segment; it reads KFQFYQGWVAIAFMLIGSNIL. Over 342–348 the chain is Cytoplasmic; it reads RKVSWLT. A helical membrane pass occupies residues 349–369; sequence AAMITPLMMLITGAAFFAFIF. Residues 370–379 are Extracellular-facing; it reads FDSVIAMHLT. Residues 380–400 form a helical membrane-spanning segment; that stretch reads GILASGPLALAVMIGMIQNVL. Over 401-438 the chain is Cytoplasmic; that stretch reads SKGVKYSLFDATKNMAYIPLDKDLRVKGQAAVEVIGGR. 436 to 442 is an ATP binding site; the sequence is GGRFGKS. A helical transmembrane segment spans residues 439–459; that stretch reads FGKSGGAIIQSTFFILFPAFG. At 460–465 the chain is on the extracellular side; it reads FVEATP. A helical membrane pass occupies residues 466–486; that stretch reads YFASIFFVIVILWIYAVKGLN. Residues 487-498 lie on the Cytoplasmic side of the membrane; that stretch reads KEYKVLVNKTEK.

It belongs to the ADP/ATP translocase tlc family.

The protein localises to the cell membrane. Provides the rickettsial cell with host ATP in exchange for rickettsial ADP. This is an obligate exchange system. This energy acquiring activity is an important component of rickettsial parasitism. The polypeptide is ADP,ATP carrier protein 1 (tlcA) (Rickettsia conorii (strain ATCC VR-613 / Malish 7)).